A 685-amino-acid chain; its full sequence is Galactocerebrosidase (685 aa).

The N-terminal stretch at 1-42 (MAEWLLSASWQRRAKAMTAAAGSAGRAAVPLLLCALLAPGGA) is a signal peptide. Substrate is bound at residue T109. N-linked (GlcNAc...) asparagine glycosylation is present at N143. W151 and N197 together coordinate substrate. E198 acts as the Proton donor/acceptor in catalysis. E274 functions as the Nucleophile in the catalytic mechanism. A disulfide bond links C287 and C394. N379 carries N-linked (GlcNAc...) asparagine glycosylation. R396 contacts substrate. N-linked (GlcNAc...) asparagine glycans are attached at residues N403, N556, N559, and N602.

The protein belongs to the glycosyl hydrolase 59 family. As to expression, detected in urine. Detected in testis, brain and placenta (at protein level). Detected in kidney and liver.

Its subcellular location is the lysosome. The enzyme catalyses a beta-D-galactosyl-(1&lt;-&gt;1')-N-acylsphing-4-enine + H2O = an N-acylsphing-4-enine + D-galactose. The catalysed reaction is beta-D-galactosyl-(1&lt;-&gt;1)-sphing-4-enine + H2O = sphing-4-enine + D-galactose. It carries out the reaction a D-galactosylceramide + H2O = an N-acyl-sphingoid base + D-galactose. Hydrolyzes the galactose ester bonds of glycolipids such as galactosylceramide and galactosylsphingosine. Enzyme with very low activity responsible for the lysosomal catabolism of galactosylceramide, a major lipid in myelin, kidney and epithelial cells of small intestine and colon. In Homo sapiens (Human), this protein is Galactocerebrosidase.